The primary structure comprises 322 residues: Phosphatidylserine decarboxylase proenzyme (322 aa).

Catalysis depends on charge relay system; for autoendoproteolytic cleavage activity residues Asp-90, His-147, and Ser-254. Residue Ser-254 is the Schiff-base intermediate with substrate; via pyruvic acid; for decarboxylase activity of the active site. The residue at position 254 (Ser-254) is a Pyruvic acid (Ser); by autocatalysis. The segment at 294-322 (EVEPAPLPADEIKAEHDASPLVDNKKDDT) is disordered. Residues 303 to 322 (DEIKAEHDASPLVDNKKDDT) show a composition bias toward basic and acidic residues.

It belongs to the phosphatidylserine decarboxylase family. PSD-B subfamily. Prokaryotic type I sub-subfamily. Heterodimer of a large membrane-associated beta subunit and a small pyruvoyl-containing alpha subunit. The cofactor is pyruvate. Is synthesized initially as an inactive proenzyme. Formation of the active enzyme involves a self-maturation process in which the active site pyruvoyl group is generated from an internal serine residue via an autocatalytic post-translational modification. Two non-identical subunits are generated from the proenzyme in this reaction, and the pyruvate is formed at the N-terminus of the alpha chain, which is derived from the carboxyl end of the proenzyme. The autoendoproteolytic cleavage occurs by a canonical serine protease mechanism, in which the side chain hydroxyl group of the serine supplies its oxygen atom to form the C-terminus of the beta chain, while the remainder of the serine residue undergoes an oxidative deamination to produce ammonia and the pyruvoyl prosthetic group on the alpha chain. During this reaction, the Ser that is part of the protease active site of the proenzyme becomes the pyruvoyl prosthetic group, which constitutes an essential element of the active site of the mature decarboxylase.

The protein localises to the cell membrane. It catalyses the reaction a 1,2-diacyl-sn-glycero-3-phospho-L-serine + H(+) = a 1,2-diacyl-sn-glycero-3-phosphoethanolamine + CO2. It participates in phospholipid metabolism; phosphatidylethanolamine biosynthesis; phosphatidylethanolamine from CDP-diacylglycerol: step 2/2. Catalyzes the formation of phosphatidylethanolamine (PtdEtn) from phosphatidylserine (PtdSer). In Salmonella paratyphi C (strain RKS4594), this protein is Phosphatidylserine decarboxylase proenzyme.